Reading from the N-terminus, the 620-residue chain is MALLQIAEPGQTAAPHQHRLAVGIDLGTTNSLVAAVRSGVADTLPDENARHSLPSIVRYTDTGIEAGFEAEAHSAKDPQNTIVSVKRFMGRSLADIQSGIQDLPYRFQASENGLPLFATEQGTVNPVQISSEILKPLISRAESTLGGDLEGIVITVPAYFDDAQRQGTKDAAALLGVKVLRLLNEPTAAAIAYGLDSGQEGVIAIYDLGGGTFDISILRLNKGVFEVLATGGDSALGGDDFDHLLHHHLLQEWQIDAPSASVSRQLLIESRRVKEVLTDESEVTATLLLDDGTTLTHVVTKSLFDSLITSLVKKTVASCRRALRDAGIKADEVLETVLVGGSTRVPLVRELVEGFFGKAPLTSIDPDRVVAIGAAIQADILVGNKPESDLLLLDVLPLSLGIETMGGLVEKVVSRNTTIPVAKAQEFTTFKDGQTAMAFHVVQGERELVDDCRSLARFTLKGIPPLAAGAAHIRVTFQVDADGLLSVTAMEKSTGVQSSIQVKPSFGLTDEEIGSMLKDSMANAKDDIARRMLAEQQVEAARVLETLSAALAKDGELLTADERNAIEQSMAVLVEVGGQDDADAIEKAIEALDASTQDFAAKRMDNSIKLALKGQSVDSI.

This sequence belongs to the heat shock protein 70 family.

Chaperone involved in the maturation of iron-sulfur cluster-containing proteins. Has a low intrinsic ATPase activity which is markedly stimulated by HscB. This is Chaperone protein HscA homolog from Shewanella sediminis (strain HAW-EB3).